Here is a 405-residue protein sequence, read N- to C-terminus: Argininosuccinate synthase (405 aa).

ATP contacts are provided by residues 10–18 (AYSGGVDTS) and alanine 38. Residue tyrosine 89 coordinates L-citrulline. Glycine 119 provides a ligand contact to ATP. Residues threonine 121, asparagine 125, and aspartate 126 each coordinate L-aspartate. L-citrulline is bound at residue asparagine 125. Residues arginine 129, serine 177, serine 186, glutamate 262, and tyrosine 274 each contribute to the L-citrulline site.

The protein belongs to the argininosuccinate synthase family. Type 1 subfamily. As to quaternary structure, homotetramer.

The protein localises to the cytoplasm. It catalyses the reaction L-citrulline + L-aspartate + ATP = 2-(N(omega)-L-arginino)succinate + AMP + diphosphate + H(+). Its pathway is amino-acid biosynthesis; L-arginine biosynthesis; L-arginine from L-ornithine and carbamoyl phosphate: step 2/3. The polypeptide is Argininosuccinate synthase (Synechococcus sp. (strain RCC307)).